The following is a 123-amino-acid chain: Large ribosomal subunit protein uL14c (123 aa).

This sequence belongs to the universal ribosomal protein uL14 family. In terms of assembly, part of the 50S ribosomal subunit.

The protein localises to the plastid. It is found in the chloroplast. Its function is as follows. Binds to 23S rRNA. This Lolium perenne (Perennial ryegrass) protein is Large ribosomal subunit protein uL14c.